Reading from the N-terminus, the 442-residue chain is Tol-Pal system protein TolB (442 aa).

The signal sequence occupies residues 1 to 26 (MRHRSCFSLFAGLALVFCLAVGTAAA).

Belongs to the TolB family. In terms of assembly, the Tol-Pal system is composed of five core proteins: the inner membrane proteins TolA, TolQ and TolR, the periplasmic protein TolB and the outer membrane protein Pal. They form a network linking the inner and outer membranes and the peptidoglycan layer.

The protein localises to the periplasm. Functionally, part of the Tol-Pal system, which plays a role in outer membrane invagination during cell division and is important for maintaining outer membrane integrity. The polypeptide is Tol-Pal system protein TolB (Nitratidesulfovibrio vulgaris (strain ATCC 29579 / DSM 644 / CCUG 34227 / NCIMB 8303 / VKM B-1760 / Hildenborough) (Desulfovibrio vulgaris)).